The sequence spans 86 residues: Small ribosomal subunit protein uS17 (86 aa).

Belongs to the universal ribosomal protein uS17 family. As to quaternary structure, part of the 30S ribosomal subunit.

Functionally, one of the primary rRNA binding proteins, it binds specifically to the 5'-end of 16S ribosomal RNA. This chain is Small ribosomal subunit protein uS17, found in Desulfitobacterium hafniense (strain DSM 10664 / DCB-2).